The following is a 139-amino-acid chain: Lymphocyte antigen 6H (139 aa).

The N-terminal stretch at Met-1 to Gly-25 is a signal peptide. The UPAR/Ly6 domain occupies Leu-26 to Ser-113. 5 cysteine pairs are disulfide-bonded: Cys-28–Cys-51, Cys-31–Cys-39, Cys-44–Cys-72, Cys-76–Cys-103, and Cys-104–Cys-109. The N-linked (GlcNAc...) asparagine glycan is linked to Asn-35. Asn-110 is lipidated: GPI-anchor amidated asparagine. A propeptide spans Gly-111–Pro-139 (removed in mature form).

Interacts with CHRNA4 and CHRNA7. In terms of tissue distribution, strongly expressed in brain, also found in lower levels in eye and reproductive tissues.

It is found in the cell membrane. Functionally, believed to act as modulator of nicotinic acetylcholine receptors (nAChRs) activity. In vitro inhibits alpha-3:beta-4-containing nAChRs maximum response. In vitro inhibits alpha-3:beta-4-containing nAChRs maximum response. May play a role in the intracellular trafficking of alpha-7-containing nAChRs and may inhibit their expression at the cell surface. Seems to inhibit alpha-7/CHRNA7 signaling in hippocampal neurons. This is Lymphocyte antigen 6H (Ly6h) from Mus musculus (Mouse).